The sequence spans 514 residues: Developmental and secondary metabolism regulator veA (514 aa).

The Velvet domain occupies 26 to 218 (NRHLWYQLTV…ADQGCHVRIR (193 aa)). Positions 40–45 (ERARAC) match the Nuclear localization signal motif. Residues 219–463 (RDVRMRKRDA…PIGSKRKHDQ (245 aa)) are disordered. Over residues 228–243 (AKSNNGRDRREDDMAR) the composition is skewed to basic and acidic residues. A compositionally biased stretch (low complexity) spans 256–267 (SAAARARSMSNS). Residues 386–396 (SYPSTPVSSHP) show a composition bias toward polar residues. A PEST region spans residues 411 to 448 (KSPSNSVSPSNSSLKITDLLVQPLPSSEPKLEVGSAPC). Positions 412–423 (SPSNSVSPSNSS) are enriched in low complexity.

It belongs to the velvet family. VeA subfamily. As to quaternary structure, component of the heterotrimeric velvet complex composed of laeA, veA and velB; VeA acting as a bridging protein between laeA and velB.

The protein localises to the nucleus. It localises to the cytoplasm. Functionally, component of the velvet transcription factor complex that controls sexual/asexual developmental ratio in response to light, promoting sexual development in the darkness while stimulating asexual sporulation under illumination. The velvet complex hat acts as a global regulator for secondary metabolite gene expression. Controls the expression of the cephalosporin C gene cluster. Regulates hyphal fragmentation. The polypeptide is Developmental and secondary metabolism regulator veA (Hapsidospora chrysogenum (strain ATCC 11550 / CBS 779.69 / DSM 880 / IAM 14645 / JCM 23072 / IMI 49137) (Acremonium chrysogenum)).